A 276-amino-acid polypeptide reads, in one-letter code: NADH-cytochrome b5 reductase 2 (276 aa).

The FAD-binding FR-type domain occupies 15–127 (EAKYPLPLIE…RGPRGRLFYH (113 aa)). Lys-17 carries the post-translational modification N6-acetyllysine. Tyr-18 carries the phosphotyrosine modification. Residues 107–137 (ENMK…IRPD) and 146–181 (LADH…RMSL) contribute to the FAD site.

This sequence belongs to the flavoprotein pyridine nucleotide cytochrome reductase family. Requires FAD as cofactor. As to expression, restricted expression.

It catalyses the reaction 2 Fe(III)-[cytochrome b5] + NADH = 2 Fe(II)-[cytochrome b5] + NAD(+) + H(+). Its function is as follows. NADH-cytochrome b5 reductases are involved in desaturation and elongation of fatty acids, cholesterol biosynthesis, drug metabolism, and, in erythrocyte, methemoglobin reduction. Responsible for NADH-dependent lucigenin chemiluminescence in spermatozoa by reducing both lucigenin and 2-[4-iodophenyl]-3-[4-nitrophenyl]-5-[2,4-disulfophenyl]-2H tetrazolium monosodium salt (WST-1). This is NADH-cytochrome b5 reductase 2 from Homo sapiens (Human).